We begin with the raw amino-acid sequence, 222 residues long: Superoxide dismutase [Mn], mitochondrial (222 aa).

The N-terminal 24 residues, 1 to 24, are a transit peptide targeting the mitochondrion; that stretch reads MLCRAACSAGRRLGPAASTAGSRH. Position 50 (histidine 50) interacts with Mn(2+). A 3'-nitrotyrosine modification is found at tyrosine 58. Lysine 68 and lysine 75 each carry N6-acetyllysine; alternate. Lysine 68 and lysine 75 each carry N6-succinyllysine; alternate. Histidine 98 serves as a coordination point for Mn(2+). Lysine 114 bears the N6-acetyllysine mark. 2 positions are modified to N6-acetyllysine; alternate: lysine 122 and lysine 130. An N6-succinyllysine; alternate mark is found at lysine 122 and lysine 130. Residues aspartate 183 and histidine 187 each contribute to the Mn(2+) site. Lysine 202 carries the N6-acetyllysine modification.

The protein belongs to the iron/manganese superoxide dismutase family. As to quaternary structure, homotetramer. Mn(2+) serves as cofactor. Post-translationally, nitrated under oxidative stress. Nitration coupled with oxidation inhibits the catalytic activity. In terms of processing, acetylation at Lys-122 decreases enzymatic activity. Deacetylated by SIRT3 upon exposure to ionizing radiations or after long fasting. Polyubiquitinated; leading to proteasomal degradation. Deubiquitinated by USP36 which increases protein stability.

The protein localises to the mitochondrion matrix. The enzyme catalyses 2 superoxide + 2 H(+) = H2O2 + O2. Its function is as follows. Destroys superoxide anion radicals which are normally produced within the cells and which are toxic to biological systems. The polypeptide is Superoxide dismutase [Mn], mitochondrial (Sod2) (Rattus norvegicus (Rat)).